A 309-amino-acid polypeptide reads, in one-letter code: MSTRELVVLGTASQAPTRTRNHNGYVLRWDDEVILFDPGEGSQRQLLYSSVTATDLTRICVTHFHGDHCLGLPGTIQRLSLDRVPHPVAVHFPAGGADYFTRLRYASSFHETAELAVMPIDTDGQQIAVRNGTLEARRLRHPIETYGYRLVEPDGCRMLPERLSAHGIAGPAVGELLRVGHLDVNGRRVTRAEVSAPRPGQRFAFVMDTGLCDAVYALAEHADLLVIESTFLASETALAAEVGHLTAAQAARVATESGVRRLVLTHFSQRYPDLSRFAAEAREHFTGDLVIAEELMTVGIPPRRVPSAG.

Zn(2+)-binding residues include H63, H65, D67, H68, H141, D208, and H266. The Proton acceptor role is filled by D67.

Belongs to the RNase Z family. In terms of assembly, homodimer. Requires Zn(2+) as cofactor.

It catalyses the reaction Endonucleolytic cleavage of RNA, removing extra 3' nucleotides from tRNA precursor, generating 3' termini of tRNAs. A 3'-hydroxy group is left at the tRNA terminus and a 5'-phosphoryl group is left at the trailer molecule.. Functionally, zinc phosphodiesterase, which displays some tRNA 3'-processing endonuclease activity. Probably involved in tRNA maturation, by removing a 3'-trailer from precursor tRNA. This is Ribonuclease Z from Salinispora arenicola (strain CNS-205).